We begin with the raw amino-acid sequence, 807 residues long: Leucine--tRNA ligase (807 aa).

Positions 38–49 match the 'HIGH' region motif; that stretch reads PYPSGSGLHVGH. Residues 579–583 carry the 'KMSKS' region motif; that stretch reads KMSKS. Lys-582 is a binding site for ATP.

Belongs to the class-I aminoacyl-tRNA synthetase family.

The protein resides in the cytoplasm. It carries out the reaction tRNA(Leu) + L-leucine + ATP = L-leucyl-tRNA(Leu) + AMP + diphosphate. This Mycoplasmopsis pulmonis (strain UAB CTIP) (Mycoplasma pulmonis) protein is Leucine--tRNA ligase.